Reading from the N-terminus, the 221-residue chain is Toxin coregulated pilus biosynthesis protein P (221 aa).

The segment at residues 5–109 is a DNA-binding region (ompR/PhoB-type); that stretch reads RVIYQFPDNL…VKLQGYRINI (105 aa). Residues 143–163 form a helical membrane-spanning segment; it reads VVPYLVFSALYVALLPVIWWS.

The protein localises to the cell membrane. In terms of biological role, involved in TCP pilus biogenesis. This is Toxin coregulated pilus biosynthesis protein P (tcpP) from Vibrio cholerae serotype O1 (strain ATCC 39315 / El Tor Inaba N16961).